The following is a 392-amino-acid chain: Tryptophan 2,3-dioxygenase (392 aa).

Residues 57–61 (FIVTH) and arginine 128 each bind substrate. Histidine 313 provides a ligand contact to heme. Residue threonine 328 participates in substrate binding.

Belongs to the tryptophan 2,3-dioxygenase family. In terms of assembly, homotetramer. Dimer of dimers. Heme serves as cofactor.

It carries out the reaction L-tryptophan + O2 = N-formyl-L-kynurenine. The protein operates within amino-acid degradation; L-tryptophan degradation via kynurenine pathway; L-kynurenine from L-tryptophan: step 1/2. It participates in pigment biosynthesis; ommochrome biosynthesis. In terms of biological role, heme-dependent dioxygenase that catalyzes the oxidative cleavage of the L-tryptophan (L-Trp) pyrrole ring and converts L-tryptophan to N-formyl-L-kynurenine. Catalyzes the oxidative cleavage of the indole moiety. The polypeptide is Tryptophan 2,3-dioxygenase (Anopheles gambiae (African malaria mosquito)).